A 296-amino-acid polypeptide reads, in one-letter code: SHSP domain-containing protein CPUR_05420 (296 aa).

The interval 50–83 (AWQTCPQQRHPHQPDVSGPPGSGFGEQPSQDTPN) is disordered. In terms of domain architecture, sHSP spans 169–296 (ETKKSFTPDI…GKGVKEITIV (128 aa)).

This sequence belongs to the small heat shock protein (HSP20) family.

Monooxygenase; part of the ergochrome gene cluster responsible for the typical purple-black color of the ergot sclerotia. The ergochrome gene cluster produces several ergot pigments including the yellow ergochrome secalonic acid and its derivatives, as well as the red anthraquinones endocrocin and clavorubin. The pathway begins with the synthesis of atrochrysone thioester by the polyketide synthase (PKS) CPUR_05437. The atrochrysone carboxyl ACP thioesterase CPUR_05436 then breaks the thioester bond and releases the atrochrysone carboxylic acid from CPUR_05437. The atrochrysone carboxylic acid is then converted to atrochrysone which is further transformed into emodin anthrone. The next step is performed by the anthrone oxygenase CPUR_05434 that catalyzes the oxidation of emodinanthrone to emodin. Emodin is further modified to yield monodictyphenone via several steps involving CPUR_05427, CPUR_05428, CPUR_05429 and CPUR_05430. The short chain dehydrogenase/reductase CPUR_05418 then catalyzes the C-5 ketoreduction to give the xanthone skeleton of the monomeric units. Ergochromes formation requires further dimerization steps of different xanthone units, probably catalyzed by the cytochrome P450 monooxygenase CPUR_05419. CPUR_05425, CPUR_05426 and CPUR_05431 are unique to Claviceps, thus it is likely that they are involved in further modification of xanthone units or in their dimerization. The yellow ergochromes and the red anthraquinone pigments endocrocin and clavorubin are products from the same PKS derived precursors and the latter are likely shunt products in the pathway of xanthone biosynthesis. It is proposed that atrochrysone carboxylic acid released from the PKS CPUR_05437 can also be converted to endocrocin anthrone which is further oxidized into endocrocin by CPUR_05435. Endocrocin could be then modified to clavorubin, possibly by CPUR_05423 and CPUR_05431. Clavorubin is the principal anthraquinone metabolite produced by the cluster with a much higher yield compared to endocrocin. This Claviceps purpurea (strain 20.1) (Ergot fungus) protein is SHSP domain-containing protein CPUR_05420.